A 366-amino-acid polypeptide reads, in one-letter code: tRNA/tmRNA (uracil-C(5))-methyltransferase (366 aa).

Positions 190, 218, 223, 239, and 299 each coordinate S-adenosyl-L-methionine. Catalysis depends on Cys-324, which acts as the Nucleophile. Glu-358 serves as the catalytic Proton acceptor.

This sequence belongs to the class I-like SAM-binding methyltransferase superfamily. RNA M5U methyltransferase family. TrmA subfamily.

It catalyses the reaction uridine(54) in tRNA + S-adenosyl-L-methionine = 5-methyluridine(54) in tRNA + S-adenosyl-L-homocysteine + H(+). It carries out the reaction uridine(341) in tmRNA + S-adenosyl-L-methionine = 5-methyluridine(341) in tmRNA + S-adenosyl-L-homocysteine + H(+). Dual-specificity methyltransferase that catalyzes the formation of 5-methyluridine at position 54 (m5U54) in all tRNAs, and that of position 341 (m5U341) in tmRNA (transfer-mRNA). In Escherichia fergusonii (strain ATCC 35469 / DSM 13698 / CCUG 18766 / IAM 14443 / JCM 21226 / LMG 7866 / NBRC 102419 / NCTC 12128 / CDC 0568-73), this protein is tRNA/tmRNA (uracil-C(5))-methyltransferase.